Reading from the N-terminus, the 139-residue chain is NADH dehydrogenase [ubiquinone] 1 alpha subcomplex subunit MCI4 (139 aa).

It belongs to the complex I NDUFA5 subunit family.

It localises to the mitochondrion inner membrane. Functionally, accessory subunit of the mitochondrial membrane respiratory chain NADH dehydrogenase (Complex I), that is believed not to be involved in catalysis. Complex I functions in the transfer of electrons from NADH to the respiratory chain. The immediate electron acceptor for the enzyme is believed to be ubiquinone. Involved in osmotic and oxidative resistance, yeast to hypha transition and the ability to damage and invade oral epithelial cells. The chain is NADH dehydrogenase [ubiquinone] 1 alpha subcomplex subunit MCI4 from Candida albicans (strain SC5314 / ATCC MYA-2876) (Yeast).